The following is a 185-amino-acid chain: Potassium-transporting ATPase KdpC subunit (185 aa).

A helical transmembrane segment spans residues Leu-8–Ala-28. The interval Gly-113–Ile-132 is disordered. Residues Gln-114 to Ser-126 show a composition bias toward polar residues.

This sequence belongs to the KdpC family. In terms of assembly, the system is composed of three essential subunits: KdpA, KdpB and KdpC.

It localises to the cell membrane. Its function is as follows. Part of the high-affinity ATP-driven potassium transport (or Kdp) system, which catalyzes the hydrolysis of ATP coupled with the electrogenic transport of potassium into the cytoplasm. This subunit acts as a catalytic chaperone that increases the ATP-binding affinity of the ATP-hydrolyzing subunit KdpB by the formation of a transient KdpB/KdpC/ATP ternary complex. The chain is Potassium-transporting ATPase KdpC subunit from Staphylococcus haemolyticus (strain JCSC1435).